The primary structure comprises 683 residues: Pre-mRNA-splicing factor CLF1 (683 aa).

HAT repeat units lie at residues 40–72 (DWQR…FEYE), 74–106 (RDMR…CELR), 108–140 (RDVN…MEES), 142–173 (GQVE…FETR), 175–206 (GQVE…FERK), 291–323 (SILF…LLEE), 336–367 (ATVK…FLET), 374–407 (LTRS…FEIR), 409–440 (EKLD…LEIK), 442–474 (KEFD…LEEN), 476–513 (GDED…FETD), 515–547 (SEFE…YESS), and 582–620 (ENKE…YESI).

Belongs to the crooked-neck family. Associated with the spliceosome.

It localises to the nucleus. Its function is as follows. Involved in pre-mRNA splicing and cell cycle progression. Required for the spliceosome assembly and initiation of the DNA replication. The polypeptide is Pre-mRNA-splicing factor CLF1 (CLF1) (Eremothecium gossypii (strain ATCC 10895 / CBS 109.51 / FGSC 9923 / NRRL Y-1056) (Yeast)).